The following is a 152-amino-acid chain: Arginine repressor (152 aa).

The protein belongs to the ArgR family.

The protein localises to the cytoplasm. Its pathway is amino-acid biosynthesis; L-arginine biosynthesis [regulation]. Its function is as follows. Regulates arginine biosynthesis genes. The polypeptide is Arginine repressor (Caldicellulosiruptor bescii (strain ATCC BAA-1888 / DSM 6725 / KCTC 15123 / Z-1320) (Anaerocellum thermophilum)).